We begin with the raw amino-acid sequence, 229 residues long: ATPase SWSAP1 (229 aa).

Residues 209 to 229 are disordered; it reads PWPTQAGDPSSGKGSSSGGQP.

In terms of assembly, interacts with ZSWIM7; they form a functional complex involved in homologous recombination repair and stabilize each other. Interacts with RAD51, RAD51B, RAD51C, RAD51D and XRCC3; involved in homologous recombination repair.

It localises to the nucleus. In terms of biological role, ATPase which is preferentially stimulated by single-stranded DNA and is involved in homologous recombination repair (HRR). Has a DNA-binding activity which is independent of its ATPase activity. This chain is ATPase SWSAP1 (SWSAP1), found in Homo sapiens (Human).